We begin with the raw amino-acid sequence, 96 residues long: UPF0235 protein YggU (96 aa).

It belongs to the UPF0235 family.

The polypeptide is UPF0235 protein YggU (Escherichia coli (strain K12 / MC4100 / BW2952)).